Reading from the N-terminus, the 171-residue chain is Disulfide bond formation protein B (171 aa).

The Cytoplasmic portion of the chain corresponds to Met-1–Ala-13. Residues Trp-14 to Phe-30 traverse the membrane as a helical segment. Residues Ser-31–Thr-48 are Periplasmic-facing. An intrachain disulfide couples Cys-40 to Cys-43. A helical membrane pass occupies residues Ala-49–Ala-63. Topologically, residues Asn-64 to Leu-70 are cytoplasmic. Residues Phe-71–Trp-88 form a helical membrane-spanning segment. The Periplasmic portion of the chain corresponds to Glu-89–Gln-144. A disulfide bond links Cys-104 and Cys-130. The chain crosses the membrane as a helical span at residues Trp-145–Ser-163. The Cytoplasmic portion of the chain corresponds to Arg-164 to Ile-171.

Belongs to the DsbB family.

Its subcellular location is the cell inner membrane. In terms of biological role, required for disulfide bond formation in some periplasmic proteins. Acts by oxidizing the DsbA protein. The polypeptide is Disulfide bond formation protein B (Pseudoalteromonas atlantica (strain T6c / ATCC BAA-1087)).